Consider the following 630-residue polypeptide: Chaperone protein HtpG (630 aa).

Residues 1 to 338 (MTVEANKETL…SNDLSLNVSR (338 aa)) form an a; substrate-binding region. Residues 339 to 555 (EILQNDSTVE…QFDMGAQMKK (217 aa)) are b. The c stretch occupies residues 556–630 (IMEAAGQKVP…LNRLLLELAN (75 aa)).

It belongs to the heat shock protein 90 family. As to quaternary structure, homodimer.

The protein localises to the cytoplasm. Functionally, molecular chaperone. Has ATPase activity. This chain is Chaperone protein HtpG, found in Marinobacter nauticus (strain ATCC 700491 / DSM 11845 / VT8) (Marinobacter aquaeolei).